The sequence spans 339 residues: MIISPEEERSLIIKILNALGVSEEHAKITADVIVDADLKGFTSHGIGRFPQYVEGIKLGTIKTSGNIEIEKETDSVALINGNHLLGQVVAYKGMKLAIEKAKNTGVGIVGIHDSNHFGIAGYYSDMAMKNDMIGITMTNTEPAVAPLGGKIPVLGTNPIAISIPSNEYYVAVDMSTAAVARGKLLEAARKNEKIPEGIAVDKNGNPTTDPNEALNGSILPFGGHKGYALCFMIEILAGPLVKAEFGSKVKGTVDPSQMCTKGDLLIAIDPSKFYDIEEFKRNVDEFVKEIKSTGKDVLIPGDRERMNIKKREKEGIELDKKLVEKLKEIADELNIELTW.

It belongs to the LDH2/MDH2 oxidoreductase family. As to quaternary structure, homodimer.

The protein localises to the cytoplasm. It carries out the reaction (S)-malate + NAD(+) = oxaloacetate + NADH + H(+). The catalysed reaction is (S)-malate + NADP(+) = oxaloacetate + NADPH + H(+). It catalyses the reaction (2S)-3-sulfolactate + NAD(+) = 3-sulfopyruvate + NADH + H(+). Its function is as follows. Acts on oxaloacetate, sulfopyruvate but not on pyruvate. Has a higher selectivity for the coenzyme NADH than for NADPH. The sequence is that of Malate/(S)-sulfolactate dehydrogenase (mdh) from Methanothermus fervidus (strain ATCC 43054 / DSM 2088 / JCM 10308 / V24 S).